The primary structure comprises 267 residues: Small ribosomal subunit protein uS3 (267 aa).

Residues 38–106 (IRKLLATGME…QVQLNILEVK (69 aa)) enclose the KH type-2 domain. The disordered stretch occupies residues 215–267 (TAASAPAGDRDRPRRERPSRPRRSGSTGTTATSTEAGRAATAVVEAPAENQEG). Over residues 222 to 233 (GDRDRPRRERPS) the composition is skewed to basic and acidic residues. The span at 238–256 (SGSTGTTATSTEAGRAATA) shows a compositional bias: low complexity.

It belongs to the universal ribosomal protein uS3 family. As to quaternary structure, part of the 30S ribosomal subunit. Forms a tight complex with proteins S10 and S14.

Binds the lower part of the 30S subunit head. Binds mRNA in the 70S ribosome, positioning it for translation. The sequence is that of Small ribosomal subunit protein uS3 from Nocardia farcinica (strain IFM 10152).